Consider the following 291-residue polypeptide: Fructose-1,6-bisphosphatase class 1 1 (291 aa).

Mg(2+)-binding residues include Glu-78, Asp-95, Leu-97, and Asp-98. Substrate-binding positions include 98–101 (DGSS), Tyr-203, and Lys-233. Glu-239 serves as a coordination point for Mg(2+).

The protein belongs to the FBPase class 1 family. As to quaternary structure, homotetramer. Requires Mg(2+) as cofactor.

The protein localises to the cytoplasm. The enzyme catalyses beta-D-fructose 1,6-bisphosphate + H2O = beta-D-fructose 6-phosphate + phosphate. It functions in the pathway carbohydrate biosynthesis; gluconeogenesis. This Haloarcula marismortui (strain ATCC 43049 / DSM 3752 / JCM 8966 / VKM B-1809) (Halobacterium marismortui) protein is Fructose-1,6-bisphosphatase class 1 1.